A 1088-amino-acid chain; its full sequence is Platelet-derived growth factor receptor alpha (1088 aa).

Positions 1–23 (MGTSQAFLVLSCLLTGPSLIVCQ) are cleaved as a signal peptide. Ig-like C2-type domains lie at 24-112 (LLLP…SEIE), 116-200 (IYIY…FKTS), 201-305 (EFNV…KTVT), 318-409 (PTFG…FELS), and 413-516 (PASI…LKLV). Over 24 to 527 (LLLPSILPNE…PSLRSELTVA (504 aa)) the chain is Extracellular. Cysteines 48 and 99 form a disulfide. Residues asparagine 75, asparagine 102, and asparagine 178 are each glycosylated (N-linked (GlcNAc...) asparagine). 2 cysteine pairs are disulfide-bonded: cysteine 149/cysteine 188 and cysteine 234/cysteine 289. Residues asparagine 352, asparagine 358, asparagine 457, and asparagine 467 are each glycosylated (N-linked (GlcNAc...) asparagine). The cysteines at positions 434 and 500 are disulfide-linked. Residues 528–548 (AAVLVLLVIVIVSLIVLVVIW) traverse the membrane as a helical segment. Residues 549–1088 (KQKPRYEIRW…SSDLVEDSFL (540 aa)) are Cytoplasmic-facing. Phosphotyrosine; by autocatalysis is present on residues tyrosine 571 and tyrosine 573. Residues 592–953 (LVLGRILGSG…HLSEIVENLL (362 aa)) enclose the Protein kinase domain. ATP is bound by residues 598–606 (LGSGAFGKV) and lysine 626. Phosphotyrosine; by autocatalysis occurs at positions 719, 730, 741, 753, 761, and 767. Catalysis depends on aspartate 817, which acts as the Proton acceptor. A phosphotyrosine; by autocatalysis mark is found at tyrosine 848, tyrosine 987, and tyrosine 1017. A disordered region spans residues 1017 to 1088 (YIIPLPDIDP…SSDLVEDSFL (72 aa)). The span at 1040 to 1058 (SSQTSEESAIETGSSSSTF) shows a compositional bias: polar residues. The segment covering 1064-1088 (ETIEDIDMMDDIGIDSSDLVEDSFL) has biased composition (acidic residues).

It belongs to the protein kinase superfamily. Tyr protein kinase family. CSF-1/PDGF receptor subfamily. In terms of assembly, interacts with homodimeric PDGFA, PDGFB and PDGFC, and with heterodimers formed by PDGFA and PDGFB. Monomer in the absence of bound ligand. Interaction with dimeric PDGFA, PDGFB and/or PDGFC leads to receptor dimerization, where both PDGFRA homodimers and heterodimers with PDGFRB are observed. Interacts (tyrosine phosphorylated) with SHB (via SH2 domain). Interacts (tyrosine phosphorylated) with SHF (via SH2 domain). Interacts (tyrosine phosphorylated) with SRC (via SH2 domain). Interacts (tyrosine phosphorylated) with PIK3R1. Interacts (tyrosine phosphorylated) with PLCG1 (via SH2 domain). Interacts (tyrosine phosphorylated) with CRK, GRB2 and GRB7. Interacts with CD248; this interaction promotes PDGF receptor signaling pathway. Ubiquitinated, leading to its internalization and degradation. In terms of processing, autophosphorylated on tyrosine residues upon ligand binding. Autophosphorylation occurs in trans, i.e. one subunit of the dimeric receptor phosphorylates tyrosine residues on the other subunit. Phosphorylation at Tyr-730 and Tyr-741 is important for interaction with PIK3R1. Phosphorylation at Tyr-719 and Tyr-753 is important for interaction with PTPN11. Phosphorylation at Tyr-761 is important for interaction with CRK. Phosphorylation at Tyr-571 and Tyr-573 is important for interaction with SRC and SRC family members. Phosphorylation at Tyr-987 and Tyr-1017 is important for interaction with PLCG1.

The protein localises to the cell membrane. It is found in the cell projection. It localises to the cilium. Its subcellular location is the golgi apparatus. The enzyme catalyses L-tyrosyl-[protein] + ATP = O-phospho-L-tyrosyl-[protein] + ADP + H(+). With respect to regulation, present in an inactive conformation in the absence of bound ligand. Binding of PDGFA and/or PDGFB leads to dimerization and activation by autophosphorylation on tyrosine residues. Inhibited by imatinib, nilotinib and sorafenib. In terms of biological role, tyrosine-protein kinase that acts as a cell-surface receptor for PDGFA, PDGFB and PDGFC and plays an essential role in the regulation of embryonic development, cell proliferation, survival and chemotaxis. Depending on the context, promotes or inhibits cell proliferation and cell migration. Plays an important role in the differentiation of bone marrow-derived mesenchymal stem cells. Required for normal skeleton development and cephalic closure during embryonic development. Required for normal development of the mucosa lining the gastrointestinal tract, and for recruitment of mesenchymal cells and normal development of intestinal villi. Plays a role in cell migration and chemotaxis in wound healing. Plays a role in platelet activation, secretion of agonists from platelet granules, and in thrombin-induced platelet aggregation. Binding of its cognate ligands - homodimeric PDGFA, homodimeric PDGFB, heterodimers formed by PDGFA and PDGFB or homodimeric PDGFC -leads to the activation of several signaling cascades; the response depends on the nature of the bound ligand and is modulated by the formation of heterodimers between PDGFRA and PDGFRB. Phosphorylates PIK3R1, PLCG1, and PTPN11. Activation of PLCG1 leads to the production of the cellular signaling molecules diacylglycerol and inositol 1,4,5-trisphosphate, mobilization of cytosolic Ca(2+) and the activation of protein kinase C. Phosphorylates PIK3R1, the regulatory subunit of phosphatidylinositol 3-kinase, and thereby mediates activation of the AKT1 signaling pathway. Mediates activation of HRAS and of the MAP kinases MAPK1/ERK2 and/or MAPK3/ERK1. Promotes activation of STAT family members STAT1, STAT3 and STAT5A and/or STAT5B. Receptor signaling is down-regulated by protein phosphatases that dephosphorylate the receptor and its down-stream effectors, and by rapid internalization of the activated receptor. In Rattus norvegicus (Rat), this protein is Platelet-derived growth factor receptor alpha (Pdgfra).